A 564-amino-acid chain; its full sequence is R-linalool synthase (564 aa).

The Mg(2+) site is built by aspartate 320, aspartate 324, aspartate 464, threonine 468, and glutamate 472. A DDXXD motif motif is present at residues 320–324; that stretch reads DDVYD.

The protein belongs to the terpene synthase family. It depends on Mg(2+) as a cofactor. Requires Mn(2+) as cofactor.

The catalysed reaction is (2E)-geranyl diphosphate + H2O = (R)-linalool + diphosphate. In terms of biological role, specifically catalyzes production of (R)-(-)-linalool, the main component of lavender essential oil. The sequence is that of R-linalool synthase from Lavandula angustifolia (Lavender).